We begin with the raw amino-acid sequence, 216 residues long: ATP phosphoribosyltransferase (216 aa).

It belongs to the ATP phosphoribosyltransferase family. Short subfamily. In terms of assembly, heteromultimer composed of HisG and HisZ subunits.

The protein resides in the cytoplasm. The catalysed reaction is 1-(5-phospho-beta-D-ribosyl)-ATP + diphosphate = 5-phospho-alpha-D-ribose 1-diphosphate + ATP. It functions in the pathway amino-acid biosynthesis; L-histidine biosynthesis; L-histidine from 5-phospho-alpha-D-ribose 1-diphosphate: step 1/9. In terms of biological role, catalyzes the condensation of ATP and 5-phosphoribose 1-diphosphate to form N'-(5'-phosphoribosyl)-ATP (PR-ATP). Has a crucial role in the pathway because the rate of histidine biosynthesis seems to be controlled primarily by regulation of HisG enzymatic activity. This is ATP phosphoribosyltransferase from Chromohalobacter salexigens (strain ATCC BAA-138 / DSM 3043 / CIP 106854 / NCIMB 13768 / 1H11).